The chain runs to 117 residues: uncharacterized protein (117 aa).

This is an uncharacterized protein from Acidianus two-tailed virus (ATV).